A 1162-amino-acid chain; its full sequence is Glycerophosphocholine phosphodiesterase GDE1 (1162 aa).

The 155-residue stretch at M1 to V155 folds into the SPX domain. 6 ANK repeats span residues Y346 to L375, E392 to L421, C423 to Y452, R458 to I487, F492 to I521, and S525 to L554. One can recognise a GP-PDE domain in the interval T817–L1146.

This sequence belongs to the GDE1 family.

Its subcellular location is the cytoplasm. The catalysed reaction is sn-glycerol 3-phosphocholine + H2O = sn-glycerol 3-phosphate + choline + H(+). In terms of biological role, glycerophosphocholine glycerophosphodiesterase responsible for the hydrolysis of intracellular glycerophosphocholine into glycerol-phosphate and choline. The choline is used for phosphatidyl-choline synthesis. Required for utilization of glycerophosphocholine as phosphate source. C.albicans can utilize GroPCho through transport and intracellular hydrolysis or through extracellular hydrolysis. This chain is Glycerophosphocholine phosphodiesterase GDE1, found in Candida albicans (strain SC5314 / ATCC MYA-2876) (Yeast).